The chain runs to 266 residues: Glucosamine-6-phosphate deaminase (266 aa).

The active-site Proton acceptor; for enolization step is Asp-72. The active-site For ring-opening step is the Asp-141. Catalysis depends on His-143, which acts as the Proton acceptor; for ring-opening step. Glu-148 (for ring-opening step) is an active-site residue.

It belongs to the glucosamine/galactosamine-6-phosphate isomerase family. NagB subfamily. Homohexamer.

The catalysed reaction is alpha-D-glucosamine 6-phosphate + H2O = beta-D-fructose 6-phosphate + NH4(+). The protein operates within amino-sugar metabolism; N-acetylneuraminate degradation; D-fructose 6-phosphate from N-acetylneuraminate: step 5/5. Allosterically activated by N-acetylglucosamine 6-phosphate (GlcNAc6P). Functionally, catalyzes the reversible isomerization-deamination of glucosamine 6-phosphate (GlcN6P) to form fructose 6-phosphate (Fru6P) and ammonium ion. The sequence is that of Glucosamine-6-phosphate deaminase from Pectobacterium carotovorum subsp. carotovorum (strain PC1).